We begin with the raw amino-acid sequence, 450 residues long: Class E vacuolar protein-sorting machinery protein HSE1 (450 aa).

One can recognise a VHS domain in the interval 15-145 (ATDGKLRSDN…RIRRKWPGLL (131 aa)). Disordered stretches follow at residues 141–167 (WPGLLEEPEKPSKQKVSHQEATDEDQE), 179–212 (FEKSKQQSNGSAVQSNSLQDHNQGQQQPQQQTTS), and 374–450 (PNTQ…PPNY). Residues 147 to 167 (EPEKPSKQKVSHQEATDEDQE) are compositionally biased toward basic and acidic residues. The UIM domain occupies 163-182 (DEDQELQRALKMSLEEFEKS). Polar residues predominate over residues 184 to 196 (QQSNGSAVQSNSL). The span at 197-209 (QDHNQGQQQPQQQ) shows a compositional bias: low complexity. The 60-residue stretch at 212–271 (SGIRRVRALYDLNANEQDELSFRKGDVIVVLEQVYRDWWRGSLHGKIGIFPLNYVTPITE) folds into the SH3 domain. Residues 394-432 (NNTYQTTNGQYTQHNITPQQQYQVPSQNYQSQPPSMQSN) are compositionally biased toward low complexity.

It belongs to the STAM family. As to quaternary structure, component of the ESCRT-0 complex composed of HSE1 and VPS27.

Its subcellular location is the endosome membrane. In terms of biological role, component of the ESCRT-0 complex which is the sorting receptor for ubiquitinated cargo proteins at the multivesicular body (MVB). The protein is Class E vacuolar protein-sorting machinery protein HSE1 (HSE1) of Candida glabrata (strain ATCC 2001 / BCRC 20586 / JCM 3761 / NBRC 0622 / NRRL Y-65 / CBS 138) (Yeast).